Here is a 333-residue protein sequence, read N- to C-terminus: Ribosomal RNA small subunit methyltransferase C (333 aa).

This sequence belongs to the methyltransferase superfamily. RsmC family. In terms of assembly, monomer.

Its subcellular location is the cytoplasm. It catalyses the reaction guanosine(1207) in 16S rRNA + S-adenosyl-L-methionine = N(2)-methylguanosine(1207) in 16S rRNA + S-adenosyl-L-homocysteine + H(+). Its function is as follows. Specifically methylates the guanine in position 1207 of 16S rRNA in the 30S particle. This is Ribosomal RNA small subunit methyltransferase C from Mannheimia succiniciproducens (strain KCTC 0769BP / MBEL55E).